The chain runs to 423 residues: COP9 signalosome complex subunit 3 (423 aa).

Residues 197-365 (NFERAMYFYE…GMVCFHDSPE (169 aa)) form the PCI domain. Positions 401 to 410 (PQFVQKSMGS) are enriched in polar residues. The tract at residues 401-423 (PQFVQKSMGSQEDDSGSKPSSYS) is disordered.

This sequence belongs to the CSN3 family. Component of the CSN complex, probably composed of cops1, cops2, cops3, cops4, cops5, cops6, cops7, cops8 and cops9.

Its subcellular location is the cytoplasm. It is found in the nucleus. Its function is as follows. Component of the COP9 signalosome complex (CSN), a complex involved in various cellular and developmental processes. The CSN complex is an essential regulator of the ubiquitin (Ubl) conjugation pathway by mediating the deneddylation of the cullin subunits of E3 ligase complexes, leading to modify the Ubl ligase activity. The sequence is that of COP9 signalosome complex subunit 3 (cops3) from Xenopus laevis (African clawed frog).